A 536-amino-acid chain; its full sequence is MIQRTTDPAAGSSTSGPPTNSLSWGSRHNGKLYTLEVVQHPIRARMCGFGDKDRRPLAPAAVATMNVYREDNTQVEVDDIDCSFFLVTVDLWSEDGKQEMNLVLHPNAAQDRGPPMPAKPRRPTNPPPPSNTHGSPPAPAIPFPSYGPPTPYYPPWSAPASDRSPSSASAVLPSISTSFGRAPGPSSATPYGPQYGPPSASSYGPPSASAYGPPSASAYGPPSASAYGPPSASTYGPSSASAYGPPSSASYGPPTSSYASSYPPYHYGPPPPPFGNYGSTSNFDHSQPVTSSVDQETNSPVVTTTARDDDQREGEASTSAAGNPRADPSNSGAPSTSPTASTMGRRESRGRRRRREEREGPDGGPDLREPIEPGSTKAREEEDARTGTEKGDPKDKSDAQRATYTRTLVGPLSSNATRLLDEHRKPGIFFLFQDLSVRTEGTFRLRLRLMNVGAPPAPEPGAAGVHTGVSPVLAQVFTKPFTVFSAKRFPGVPDTTALSIAFNQQNMKLPLRNRHGSGSKRRRRGAGGGSDDEESD.

The span at Met-1–Ser-26 shows a compositional bias: polar residues. Disordered stretches follow at residues Met-1–Arg-27, Pro-106–Phe-143, Ser-157–Val-409, and Lys-508–Asp-536. The 488-residue stretch at Gly-25–Arg-512 folds into the Velvet domain. Residues Pro-114–Phe-143 show a composition bias toward pro residues. Low complexity-rich tracts occupy residues Ala-158 to Ala-170 and Pro-190 to Tyr-265. Positions Thr-280–Thr-305 are enriched in polar residues. Residues Ala-306–Glu-315 show a composition bias toward basic and acidic residues. Over residues Pro-328–Thr-342 the composition is skewed to low complexity. The span at Glu-356–Ala-399 shows a compositional bias: basic and acidic residues. Residues Gln-400–Val-409 are compositionally biased toward polar residues. The segment covering Leu-511–Gly-525 has biased composition (basic residues).

The protein belongs to the velvet family. VelB subfamily. In terms of assembly, component of the heterotrimeric velvet complex composed of laeA, veA and velB; VeA acting as a bridging protein between laeA and velB. Forms a heterodimeric complex with vosA; the formation of the velB-vosA complex is light-dependent.

It is found in the nucleus. The protein resides in the cytoplasm. Functionally, component of the velvet transcription factor complex that controls sexual/asexual developmental ratio in response to light, promoting sexual development in the darkness while stimulating asexual sporulation under illumination. The velvet complex acts as a global regulator for secondary metabolite gene expression. Component of the velB-VosA heterodimeric complex that plays a dual role in activating genes associated with spore maturation and repressing certain development-associated genes. The velB-VosA complex binds DNA through the DNA-binding domain of vosA that recognizes an 11-nucleotide consensus sequence 5'-CTGGCCGCGGC-3' consisting of two motifs in the promoters of key developmental regulatory genes. The polypeptide is Velvet complex subunit B (Schizophyllum commune (strain H4-8 / FGSC 9210) (Split gill fungus)).